We begin with the raw amino-acid sequence, 85 residues long: Large ribosomal subunit protein bL27 (85 aa).

Positions 1–21 (MAHKKAAGSSRNGRDSESKRL) are disordered.

The protein belongs to the bacterial ribosomal protein bL27 family.

The chain is Large ribosomal subunit protein bL27 from Chromohalobacter salexigens (strain ATCC BAA-138 / DSM 3043 / CIP 106854 / NCIMB 13768 / 1H11).